The following is a 187-amino-acid chain: Large ribosomal subunit protein bL32m (187 aa).

C109, C112, C122, and C125 together coordinate Zn(2+).

It belongs to the bacterial ribosomal protein bL32 family. Component of the mitochondrial ribosome large subunit (39S) which comprises a 16S rRNA and about 50 distinct proteins. Post-translationally, MRPL32 precursor is processed by the m-AAA protease (composed of AFG3L2 and SPG7), which cleaves the N-terminal transit peptide. Cleavage by the m-AAA protease takes place prior to assembly into the large subunit, an essential step for mitochondrial ribosome (mitoribosome) assembly. Proper processing by the m-AAA protease is dependent on the zinc-binding region within the tightly folded C-terminal domain of MRPL32: zinc-dependent folding halts degradation initiated from the N-terminus and triggers the release of mature MRPL32.

The protein resides in the mitochondrion. Its function is as follows. Component of the mitochondrial large ribosomal subunit (mt-LSU). The mitochondrial ribosome (mitoribosome) is a large ribonucleoprotein complex responsible for the synthesis of proteins inside mitochondria. The sequence is that of Large ribosomal subunit protein bL32m (Mrpl32) from Mus musculus (Mouse).